The following is a 332-amino-acid chain: Tryptophan--tRNA ligase (332 aa).

ATP contacts are provided by residues 13–15 (KPS) and 21–22 (GN). The 'HIGH' region signature appears at 14–22 (PSGDLTLGN). Asp-137 provides a ligand contact to L-tryptophan. Residues 149-151 (GKD), Ile-188, and 197-201 (KMSKS) contribute to the ATP site. The 'KMSKS' region motif lies at 197 to 201 (KMSKS).

Belongs to the class-I aminoacyl-tRNA synthetase family. As to quaternary structure, homodimer.

Its subcellular location is the cytoplasm. It catalyses the reaction tRNA(Trp) + L-tryptophan + ATP = L-tryptophyl-tRNA(Trp) + AMP + diphosphate + H(+). Catalyzes the attachment of tryptophan to tRNA(Trp). The protein is Tryptophan--tRNA ligase of Clostridium perfringens (strain 13 / Type A).